The following is a 122-amino-acid chain: Succinate dehydrogenase assembly factor 3, mitochondrial (122 aa).

A mitochondrion-targeting transit peptide spans 1 to 47 (MHPSVVRLVKPRRPERITSPILPPLPLYRAILRAHHRKLPQELRYLG).

Belongs to the complex I LYR family. SDHAF3 subfamily. In terms of assembly, interacts with the iron-sulfur protein subunit within the SDH catalytic dimer.

The protein resides in the mitochondrion matrix. Functionally, plays an essential role in the assembly of succinate dehydrogenase (SDH), an enzyme complex (also referred to as respiratory complex II) that is a component of both the tricarboxylic acid (TCA) cycle and the mitochondrial electron transport chain, and which couples the oxidation of succinate to fumarate with the reduction of ubiquinone (coenzyme Q) to ubiquinol. Promotes maturation of the iron-sulfur protein subunit of the SDH catalytic dimer, protecting it from the deleterious effects of oxidants. May act together with SDHAF1. The sequence is that of Succinate dehydrogenase assembly factor 3, mitochondrial from Candida albicans (strain SC5314 / ATCC MYA-2876) (Yeast).